The chain runs to 250 residues: tRNA pseudouridine synthase A (250 aa).

The active-site Nucleophile is Asp-52. Tyr-110 is a binding site for substrate.

Belongs to the tRNA pseudouridine synthase TruA family. Homodimer.

It catalyses the reaction uridine(38/39/40) in tRNA = pseudouridine(38/39/40) in tRNA. In terms of biological role, formation of pseudouridine at positions 38, 39 and 40 in the anticodon stem and loop of transfer RNAs. The polypeptide is tRNA pseudouridine synthase A (Citrifermentans bemidjiense (strain ATCC BAA-1014 / DSM 16622 / JCM 12645 / Bem) (Geobacter bemidjiensis)).